A 567-amino-acid polypeptide reads, in one-letter code: Proton-coupled zinc antiporter SLC30A9, mitochondrial (567 aa).

Transmembrane regions (helical) follow at residues Val-238–Ile-258, Gly-313–Leu-333, Leu-341–Val-361, Val-391–Gly-411, and Ser-423–Thr-443. The LXXLL motif motif lies at Leu-461–Leu-465.

The protein belongs to the cation diffusion facilitator (CDF) transporter (TC 2.A.4) family. SLC30A subfamily. In terms of assembly, interacts with GRIP1, ESR1, AR and CTNNB1.

It is found in the mitochondrion membrane. It localises to the nucleus. The protein localises to the endoplasmic reticulum. It carries out the reaction Zn(2+)(in) + 2 H(+)(out) = Zn(2+)(out) + 2 H(+)(in). Acts as a zinc transporter involved in intracellular zinc homeostasis. Functions as a secondary coactivator for nuclear receptors by cooperating with p160 coactivators subtypes. Plays a role in transcriptional activation of Wnt-responsive genes. Its function is as follows. Mitochondrial proton-coupled zinc ion antiporter mediating the export of zinc from the mitochondria and involved in zinc homeostasis, zinc mobilization as well as mitochondrial morphology and health. In nucleus, functions as a secondary coactivator for nuclear receptors by cooperating with p160 coactivators subtypes. Plays a role in transcriptional activation of Wnt-responsive genes. The polypeptide is Proton-coupled zinc antiporter SLC30A9, mitochondrial (Slc30a9) (Mus musculus (Mouse)).